The primary structure comprises 302 residues: Sulfate adenylyltransferase subunit 2 (302 aa).

This sequence belongs to the PAPS reductase family. CysD subfamily. Heterodimer composed of CysD, the smaller subunit, and CysN.

The catalysed reaction is sulfate + ATP + H(+) = adenosine 5'-phosphosulfate + diphosphate. It functions in the pathway sulfur metabolism; hydrogen sulfide biosynthesis; sulfite from sulfate: step 1/3. In terms of biological role, with CysN forms the ATP sulfurylase (ATPS) that catalyzes the adenylation of sulfate producing adenosine 5'-phosphosulfate (APS) and diphosphate, the first enzymatic step in sulfur assimilation pathway. APS synthesis involves the formation of a high-energy phosphoric-sulfuric acid anhydride bond driven by GTP hydrolysis by CysN coupled to ATP hydrolysis by CysD. This chain is Sulfate adenylyltransferase subunit 2, found in Pectobacterium carotovorum subsp. carotovorum (strain PC1).